Reading from the N-terminus, the 104-residue chain is L-rhamnose mutarotase (104 aa).

Tyrosine 18 is a substrate binding site. Residue histidine 22 is the Proton donor of the active site. Substrate is bound by residues tyrosine 41 and 76–77; that span reads WW.

It belongs to the rhamnose mutarotase family. In terms of assembly, homodimer.

The protein localises to the cytoplasm. It carries out the reaction alpha-L-rhamnose = beta-L-rhamnose. It participates in carbohydrate metabolism; L-rhamnose metabolism. In terms of biological role, involved in the anomeric conversion of L-rhamnose. In Salmonella newport (strain SL254), this protein is L-rhamnose mutarotase.